The following is a 379-amino-acid chain: tRNA(Met) cytidine acetate ligase (379 aa).

Residues 7-20 (ITEYNPFHNGHQYH), Gly100, Asn153, and Arg178 contribute to the ATP site.

It belongs to the TmcAL family.

The protein localises to the cytoplasm. It catalyses the reaction cytidine(34) in elongator tRNA(Met) + acetate + ATP = N(4)-acetylcytidine(34) in elongator tRNA(Met) + AMP + diphosphate. Catalyzes the formation of N(4)-acetylcytidine (ac(4)C) at the wobble position of elongator tRNA(Met), using acetate and ATP as substrates. First activates an acetate ion to form acetyladenylate (Ac-AMP) and then transfers the acetyl group to tRNA to form ac(4)C34. In Staphylococcus aureus (strain Mu3 / ATCC 700698), this protein is tRNA(Met) cytidine acetate ligase.